A 228-amino-acid polypeptide reads, in one-letter code: Ribose-5-phosphate isomerase A (228 aa).

Substrate contacts are provided by residues 28–31, 84–87, and 97–100; these read TGST, DGAD, and KGGG. Glu-106 acts as the Proton acceptor in catalysis. A substrate-binding site is contributed by Lys-124.

It belongs to the ribose 5-phosphate isomerase family. As to quaternary structure, homodimer.

The catalysed reaction is aldehydo-D-ribose 5-phosphate = D-ribulose 5-phosphate. Its pathway is carbohydrate degradation; pentose phosphate pathway; D-ribose 5-phosphate from D-ribulose 5-phosphate (non-oxidative stage): step 1/1. Functionally, catalyzes the reversible conversion of ribose-5-phosphate to ribulose 5-phosphate. This Levilactobacillus brevis (strain ATCC 367 / BCRC 12310 / CIP 105137 / JCM 1170 / LMG 11437 / NCIMB 947 / NCTC 947) (Lactobacillus brevis) protein is Ribose-5-phosphate isomerase A.